Reading from the N-terminus, the 422-residue chain is Dihydroorotase (422 aa).

Zn(2+) contacts are provided by H61 and H63. Substrate contacts are provided by residues H63 to R65 and N95. Residue D153 coordinates Zn(2+). Substrate is bound at residue N278. D305 is a binding site for Zn(2+). D305 is an active-site residue. Substrate-binding positions include H309 and P322–G323.

The protein belongs to the metallo-dependent hydrolases superfamily. DHOase family. Class I DHOase subfamily. In terms of assembly, monomer. Forms a 1:1 stoichiometric complex with PyrB. The complex exists as an equilibrium mixture of heterohexamers, composed of 3 PyrC and 3 PyrB subunits, and dodecamers. The complex has both DHOase and ATCase activities. Zn(2+) is required as a cofactor.

The enzyme catalyses (S)-dihydroorotate + H2O = N-carbamoyl-L-aspartate + H(+). It participates in pyrimidine metabolism; UMP biosynthesis via de novo pathway; (S)-dihydroorotate from bicarbonate: step 3/3. With respect to regulation, the monomer has very low activity by itself. Activated several thousandfold by formation of a complex with PyrB aspartate carbamoyltransferase (ATCase). Functionally, catalyzes the reversible cyclization of carbamoyl aspartate to dihydroorotate. The protein is Dihydroorotase of Aquifex aeolicus (strain VF5).